A 262-amino-acid chain; its full sequence is Type III pantothenate kinase (262 aa).

12-19 (DIGNTSIA) provides a ligand contact to ATP. Residues Tyr94 and 109 to 112 (GSDV) contribute to the substrate site. Asp111 functions as the Proton acceptor in the catalytic mechanism. Asp132 contacts K(+). Thr135 serves as a coordination point for ATP. Thr187 lines the substrate pocket.

Belongs to the type III pantothenate kinase family. As to quaternary structure, homodimer. NH4(+) serves as cofactor. Requires K(+) as cofactor.

The protein localises to the cytoplasm. It catalyses the reaction (R)-pantothenate + ATP = (R)-4'-phosphopantothenate + ADP + H(+). It participates in cofactor biosynthesis; coenzyme A biosynthesis; CoA from (R)-pantothenate: step 1/5. Catalyzes the phosphorylation of pantothenate (Pan), the first step in CoA biosynthesis. The protein is Type III pantothenate kinase of Borreliella burgdorferi (strain ATCC 35210 / DSM 4680 / CIP 102532 / B31) (Borrelia burgdorferi).